An 814-amino-acid chain; its full sequence is Coiled-coil and C2 domain-containing protein 1-like (814 aa).

Positions 1–11 are enriched in basic and acidic residues; sequence MFAKRKPEPAK. 2 disordered regions span residues 1 to 136 and 157 to 263; these read MFAK…TFLP and EANA…RSRQ. Acidic residues predominate over residues 25-47; the sequence is IPDDFDPTSGYGDDDGGDSDLEA. The segment covering 73–85 has biased composition (basic and acidic residues); the sequence is DLDKMIADSLRDV. 2 stretches are compositionally biased toward acidic residues: residues 86–100 and 110–130; these read SDDDDDENLENDSDL and LEEEPEAEEAAAEPAASEEEP. The segment at 143–201 is DM14 1; that stretch reads LGIIKQRLEIYKQAEANAKASGDSGKARRFGRGLKTLQDLHKQAAAGKTINVDDIPPEV. The span at 205-230 shows a compositional bias: low complexity; the sequence is PAGDPSPAADESPAPSTPVSQPTRVA. Over residues 231-254 the composition is skewed to pro residues; the sequence is PAPPTPTSPPAATPPPAPATPPNP. 2 DM14 regions span residues 256-314 and 358-416; these read VAQM…PPPP and LEAL…PVPP. A coiled-coil region spans residues 351–378; sequence AAAAESMLEALQRRLEKYKSVEAAAKAE. Positions 414–425 are enriched in pro residues; it reads VPPGFGPLPSTE. The tract at residues 414–486 is disordered; the sequence is VPPGFGPLPS…LTTRVTGNHQ (73 aa). The segment covering 426–462 has biased composition (low complexity); it reads PAPAATPSLPTSPTSPPATASTSAGGTPSGSSATTPT. Polar residues predominate over residues 475-486; the sequence is TELTTRVTGNHQ. Positions 495–553 are DM14 4; the sequence is MKLLLERQKEFKVAAIEAKKAGEIDQAKEYLKIYKGFDSLLNAASSGLPVDLSTLPVPP. The 140-residue stretch at 633–772 folds into the C2 domain; sequence RKGQPLPKFH…ETKCDIHDTY (140 aa).

It belongs to the CC2D1 family. Interacts (via DM14 domains 1 and 3) with shrb; the interaction is direct and blocks access to the surface involved in shrb polymerization. This interaction may be required for the ESCRT-III complex role in multivesicular body formation.

The protein resides in the cytoplasm. It localises to the cytosol. The protein localises to the apicolateral cell membrane. It is found in the cell cortex. Its subcellular location is the endosome. Phosphatidyl inositol monophosphate binding protein involved in endosomal protein sorting through regulation of the endosomal sorting required for transport (ESCRT) pathway. Required for full activity of the ESCRT-III complex core component shrb/shrub, probably by preventing its inappropriate polymerisation. Required, but not essential, for the efficient generation of intraluminal vesicles (ILVs) in multivesicular bodies (MVBs). Involved in a late stage of the endosomal pathway targeting transmembrane proteins of the plasma membrane for lysosomal degradation. Plays a critical role in regulation of multiple signal transduction pathways, including the Notch and BMP/decapentaplegic (dpp) signaling pathways, through targeting of membrane bound receptors to multivesicular bodies, isolating them from the cytoplasm and targeting them for lysosomal degradation. Involved in targeting N/Notch for endosomal degradation, negatively regulating the Notch signaling pathway. Regulates Notch signaling in imaginal disk cells and follicle cells during oogenesis and multiple developmental processes, including development of wings, veins, legs, eyes and bristles. Restricts the activity of Notch to the dorsoventral (D/V) boundary of the wing imaginal disk. In external sensory organ development regulates Notch signaling during asymmetric cell division and differentiation of sensory organ precursor cells. May be involved in regulation of apoptosis and cell growth independent of Notch signaling. Involved in targeting tkv for endosomal degradation, negatively regulating the BMP/decapentaplegic (dpp) signaling pathway. Regulates the BMP/dpp signaling pathway in follicle cells during oogenesis, but not in imaginal disk cells during wing development. May be involved in differentiation or morphogenesis of peripodial epithelial cells in the developing imaginal disk. Involved in abscission of germline cells during oogenesis. The sequence is that of Coiled-coil and C2 domain-containing protein 1-like from Drosophila pseudoobscura pseudoobscura (Fruit fly).